Consider the following 559-residue polypeptide: NAD-dependent malic enzyme 2 (559 aa).

Y98 acts as the Proton donor in catalysis. NAD(+) is bound at residue R151. The Proton acceptor role is filled by K169. E240, D241, and D264 together coordinate a divalent metal cation. NAD(+) is bound by residues D264 and N413.

Belongs to the malic enzymes family. Homotetramer. Mg(2+) is required as a cofactor. Requires Mn(2+) as cofactor.

The catalysed reaction is (S)-malate + NAD(+) = pyruvate + CO2 + NADH. It catalyses the reaction oxaloacetate + H(+) = pyruvate + CO2. The polypeptide is NAD-dependent malic enzyme 2 (Vibrio vulnificus (strain YJ016)).